The primary structure comprises 554 residues: Arginine--tRNA ligase (554 aa).

Residues 129–139 (ANPTGPLHIGH) carry the 'HIGH' region motif.

This sequence belongs to the class-I aminoacyl-tRNA synthetase family. As to quaternary structure, monomer.

The protein resides in the cytoplasm. The catalysed reaction is tRNA(Arg) + L-arginine + ATP = L-arginyl-tRNA(Arg) + AMP + diphosphate. This Syntrophotalea carbinolica (strain DSM 2380 / NBRC 103641 / GraBd1) (Pelobacter carbinolicus) protein is Arginine--tRNA ligase.